A 427-amino-acid polypeptide reads, in one-letter code: Gamma-glutamyl phosphate reductase (427 aa).

The protein belongs to the gamma-glutamyl phosphate reductase family.

It localises to the cytoplasm. It carries out the reaction L-glutamate 5-semialdehyde + phosphate + NADP(+) = L-glutamyl 5-phosphate + NADPH + H(+). Its pathway is amino-acid biosynthesis; L-proline biosynthesis; L-glutamate 5-semialdehyde from L-glutamate: step 2/2. Its function is as follows. Catalyzes the NADPH-dependent reduction of L-glutamate 5-phosphate into L-glutamate 5-semialdehyde and phosphate. The product spontaneously undergoes cyclization to form 1-pyrroline-5-carboxylate. This chain is Gamma-glutamyl phosphate reductase, found in Rhizobium meliloti (strain 1021) (Ensifer meliloti).